Consider the following 505-residue polypeptide: Histidine ammonia-lyase (505 aa).

A cross-link (5-imidazolinone (Ala-Gly)) is located at residues 141 to 143; the sequence is ASG. At serine 142 the chain carries 2,3-didehydroalanine (Ser).

Belongs to the PAL/histidase family. Contains an active site 4-methylidene-imidazol-5-one (MIO), which is formed autocatalytically by cyclization and dehydration of residues Ala-Ser-Gly.

Its subcellular location is the cytoplasm. It carries out the reaction L-histidine = trans-urocanate + NH4(+). It participates in amino-acid degradation; L-histidine degradation into L-glutamate; N-formimidoyl-L-glutamate from L-histidine: step 1/3. In Bacillus cytotoxicus (strain DSM 22905 / CIP 110041 / 391-98 / NVH 391-98), this protein is Histidine ammonia-lyase.